The following is a 270-amino-acid chain: tRNA pseudouridine synthase A (270 aa).

The Nucleophile role is filled by aspartate 60. The tract at residues 107-111 is RNA binding; the sequence is FHARF. Tyrosine 118 serves as a coordination point for substrate. The interaction with tRNA stretch occupies residues 168–172; that stretch reads QCQSR.

Belongs to the tRNA pseudouridine synthase TruA family. In terms of assembly, homodimer.

It catalyses the reaction uridine(38/39/40) in tRNA = pseudouridine(38/39/40) in tRNA. Formation of pseudouridine at positions 38, 39 and 40 in the anticodon stem and loop of transfer RNAs. The protein is tRNA pseudouridine synthase A of Shigella boydii serotype 18 (strain CDC 3083-94 / BS512).